Reading from the N-terminus, the 396-residue chain is Putative amidohydrolase YhaA (396 aa).

Aspartate 85 is a catalytic residue. The active-site Proton acceptor is the glutamate 143. Zn(2+)-binding residues include glutamate 144, arginine 182, and histidine 368.

Belongs to the peptidase M20A family. Requires Zn(2+) as cofactor. Co(2+) is required as a cofactor.

This Bacillus subtilis (strain 168) protein is Putative amidohydrolase YhaA (yhaA).